We begin with the raw amino-acid sequence, 269 residues long: Tryptophan synthase alpha chain (269 aa).

Catalysis depends on proton acceptor residues glutamate 41 and aspartate 52.

This sequence belongs to the TrpA family. In terms of assembly, tetramer of two alpha and two beta chains.

The enzyme catalyses (1S,2R)-1-C-(indol-3-yl)glycerol 3-phosphate + L-serine = D-glyceraldehyde 3-phosphate + L-tryptophan + H2O. The protein operates within amino-acid biosynthesis; L-tryptophan biosynthesis; L-tryptophan from chorismate: step 5/5. Functionally, the alpha subunit is responsible for the aldol cleavage of indoleglycerol phosphate to indole and glyceraldehyde 3-phosphate. The chain is Tryptophan synthase alpha chain from Geobacillus stearothermophilus (Bacillus stearothermophilus).